Here is an 862-residue protein sequence, read N- to C-terminus: Taxadiene synthase (862 aa).

Residues 45-66 (RVKMSRGSGGPGPVVMMSSSTG) are disordered. Mg(2+) contacts are provided by Asp-613, Asp-617, Asn-757, Thr-761, and Glu-765. The DDXXD motif signature appears at 613 to 617 (DDMAD).

The protein belongs to the terpene synthase family. It depends on Mg(2+) as a cofactor.

It catalyses the reaction (2E,6E,10E)-geranylgeranyl diphosphate = taxa-4(5),11(12)-diene + diphosphate. The protein operates within alkaloid biosynthesis; taxol biosynthesis; taxa-4(20),11-dien-5alpha-ol from geranylgeranyl diphosphate: step 1/2. In terms of biological role, catalyzes the cyclization of the ubiquitous isoprenoid intermediate geranylgeranyl diphosphate to taxa-4,11-diene, the parent olefin with a taxane skeleton. This is Taxadiene synthase (TDC1) from Taxus chinensis (Chinese yew).